Reading from the N-terminus, the 162-residue chain is Tripartite terminase subunit 2 (162 aa).

A disordered region spans residues 1–58 (MYGRSNAPGCQPPVRAHPPSSPMTSRLQLAAMEQNASDAALSGMQQARSRQASPKRLR). A compositionally biased stretch (polar residues) spans 43-52 (GMQQARSRQA).

The protein belongs to the herpesviridae TRM2 protein family. Associates with TRM1 and TRM3 to form the tripartite terminase complex.

The protein localises to the host nucleus. In terms of biological role, component of the molecular motor that translocates viral genomic DNA in empty capsid during DNA packaging. Forms a tripartite terminase complex together with TRM1 and TRM3 in the host cytoplasm. Once the complex reaches the host nucleus, it interacts with the capsid portal vertex. This portal forms a ring in which genomic DNA is translocated into the capsid. This Equine herpesvirus 1 (strain Ab4p) (EHV-1) protein is Tripartite terminase subunit 2.